A 329-amino-acid polypeptide reads, in one-letter code: GTPase Obg (329 aa).

The 159-residue stretch at 1–159 folds into the Obg domain; sequence MQFIDYAEIE…RWLRLELKLL (159 aa). The 169-residue stretch at 160-328 folds into the OBG-type G domain; sequence AEVGIIGLPN…LLQIVWQLLD (169 aa). GTP contacts are provided by residues 166–173, 191–195, 213–216, 280–283, and 309–311; these read GLPNAGKS, FTTLV, DIPG, NKMD, and SGV. Residues Ser-173 and Thr-193 each coordinate Mg(2+).

This sequence belongs to the TRAFAC class OBG-HflX-like GTPase superfamily. OBG GTPase family. In terms of assembly, monomer. It depends on Mg(2+) as a cofactor.

Its subcellular location is the cytoplasm. Functionally, an essential GTPase which binds GTP, GDP and possibly (p)ppGpp with moderate affinity, with high nucleotide exchange rates and a fairly low GTP hydrolysis rate. Plays a role in control of the cell cycle, stress response, ribosome biogenesis and in those bacteria that undergo differentiation, in morphogenesis control. In Rippkaea orientalis (strain PCC 8801 / RF-1) (Cyanothece sp. (strain PCC 8801)), this protein is GTPase Obg.